Consider the following 610-residue polypeptide: Elongation factor 4 (610 aa).

Residues 11–193 (EKIRNFSIIA…QIVEKVPAPT (183 aa)) enclose the tr-type G domain. Residues 23–28 (DHGKST) and 140–143 (NKID) each bind GTP.

Belongs to the TRAFAC class translation factor GTPase superfamily. Classic translation factor GTPase family. LepA subfamily.

It localises to the cell membrane. The catalysed reaction is GTP + H2O = GDP + phosphate + H(+). Its function is as follows. Required for accurate and efficient protein synthesis under certain stress conditions. May act as a fidelity factor of the translation reaction, by catalyzing a one-codon backward translocation of tRNAs on improperly translocated ribosomes. Back-translocation proceeds from a post-translocation (POST) complex to a pre-translocation (PRE) complex, thus giving elongation factor G a second chance to translocate the tRNAs correctly. Binds to ribosomes in a GTP-dependent manner. In Streptococcus pyogenes serotype M12 (strain MGAS9429), this protein is Elongation factor 4.